The primary structure comprises 626 residues: Chaperone protein HtpG (626 aa).

Residues 1 to 341 form an a; substrate-binding region; it reads METKQFKAES…SEDLSLNISR (341 aa). Positions 342-552 are b; sequence EILQHDRQLK…EGELSIEMEK (211 aa). Residues 490-509 form a disordered region; it reads DLGIEGEEKENTSSSDDKEN. The segment covering 498-509 has biased composition (basic and acidic residues); sequence KENTSSSDDKEN. The c stretch occupies residues 553 to 626; that stretch reads VLNAMPNNQN…FTNNICKIMK (74 aa).

It belongs to the heat shock protein 90 family. In terms of assembly, homodimer.

It is found in the cytoplasm. In terms of biological role, molecular chaperone. Has ATPase activity. In Clostridium botulinum (strain Okra / Type B1), this protein is Chaperone protein HtpG.